A 202-amino-acid polypeptide reads, in one-letter code: Complement component C8 gamma chain (202 aa).

The N-terminal stretch at 1–20 (MLPPGTATLLTLLLAAGSLG) is a signal peptide. Q21 bears the Pyrrolidone carboxylic acid mark. A disulfide bond links C96 and C188.

The protein belongs to the calycin superfamily. Lipocalin family. In terms of assembly, heterotrimer of 3 chains: alpha (C8A), beta (C8B) and gamma (C8G); the alpha and gamma chains are disulfide bonded. Component of the membrane attack complex (MAC), composed of complement C5b, C6, C7, C8A, C8B, C8G and multiple copies of the pore-forming subunit C9.

It is found in the secreted. The protein localises to the target cell membrane. Membrane attack complex (MAC) assembly is inhibited by CD59, thereby protecting self-cells from damage during complement activation. MAC assembly is also inhibited by clusterin (CLU) chaperones that inhibit polymerization of C9. Functionally, component of the membrane attack complex (MAC), a multiprotein complex activated by the complement cascade, which inserts into a target cell membrane and forms a pore, leading to target cell membrane rupture and cell lysis. The MAC is initiated by proteolytic cleavage of C5 into complement C5b in response to the classical, alternative, lectin and GZMK complement pathways. The complement pathways consist in a cascade of proteins that leads to phagocytosis and breakdown of pathogens and signaling that strengthens the adaptive immune system. C8G, together with C8A and C8B, inserts into the target membrane, but does not form pores by itself. During MAC assembly, associates with C5b, C6 and C7 to form the C5b8 intermediate complex that inserts into the target membrane and traverses the bilayer increasing membrane rigidity. In Homo sapiens (Human), this protein is Complement component C8 gamma chain.